Here is a 311-residue protein sequence, read N- to C-terminus: Nucleotide-binding protein Acel_1111 (311 aa).

30-37 (GLSGAGRS) contacts ATP. Residue 81 to 84 (DVRS) participates in GTP binding.

It belongs to the RapZ-like family.

Displays ATPase and GTPase activities. In Acidothermus cellulolyticus (strain ATCC 43068 / DSM 8971 / 11B), this protein is Nucleotide-binding protein Acel_1111.